The sequence spans 377 residues: MTLDLIKIRRDLHQIPEIGLEEFKTQAYLLERIAEMTEGKDFVEQRTWRTGILVFLHGSAPEKTIGWRTDIDGLPIVEETGLDFKSIHEGRMHACGHDIHMTTALGLLDQMLQVQPKNNMLFLFQPAEENEAGGMLMYEDGAFGDWLPDEFYGLHVRPDFKVGDIATNTNTLFAGTCEVLVTFKGKGGHAAFPHEANDALVAASYFITQVQTIVSRNVDPIQGGVVTFGSFHAGTTNNVIAETAEVYGTIRTLTQEMSLLIQKRVRQIAEGVAASFGMEVDIMLKQGGYLPVENNPALAKELMAFFDASPAVNLIDCLPAMTGEDFGYLLSKVPGVMFWLGIDTPYALHHPKMSPNEEALAFAVSEIGKFLKYKAED.

The active site involves Asp70. Glu129 serves as the catalytic Proton acceptor.

Belongs to the peptidase M20A family. N-acetyldiaminopimelate deacetylase subfamily.

The catalysed reaction is N-acetyl-(2S,6S)-2,6-diaminopimelate + H2O = (2S,6S)-2,6-diaminopimelate + acetate. It participates in amino-acid biosynthesis; L-lysine biosynthesis via DAP pathway; LL-2,6-diaminopimelate from (S)-tetrahydrodipicolinate (acetylase route): step 3/3. Catalyzes the conversion of N-acetyl-diaminopimelate to diaminopimelate and acetate. In Streptococcus thermophilus (strain CNRZ 1066), this protein is N-acetyldiaminopimelate deacetylase.